The chain runs to 802 residues: Phenylalanine--tRNA ligase beta subunit (802 aa).

In terms of domain architecture, tRNA-binding spans 40 to 155 (SASLKNVVVG…EHVETGVSAI (116 aa)). Positions 409-484 (KAVNKIETSL…RIYGYDEIPV (76 aa)) constitute a B5 domain. Residues D462, D468, E471, and E472 each coordinate Mg(2+). Positions 709-802 (PRYPEMTRDL…LQAKLHAIIR (94 aa)) constitute an FDX-ACB domain.

This sequence belongs to the phenylalanyl-tRNA synthetase beta subunit family. Type 1 subfamily. In terms of assembly, tetramer of two alpha and two beta subunits. Mg(2+) is required as a cofactor.

The protein resides in the cytoplasm. The enzyme catalyses tRNA(Phe) + L-phenylalanine + ATP = L-phenylalanyl-tRNA(Phe) + AMP + diphosphate + H(+). This chain is Phenylalanine--tRNA ligase beta subunit, found in Listeria innocua serovar 6a (strain ATCC BAA-680 / CLIP 11262).